The sequence spans 865 residues: Ribosome biogenesis protein BOP1 homolog (865 aa).

Disordered regions lie at residues 1–195 and 207–240; these read MVAN…LKLG and KTRG…EEDI. 3 stretches are compositionally biased toward acidic residues: residues 30-44, 57-79, and 87-159; these read LDES…ESDY, NEGE…DDVL, and DGEE…EEEA. Positions 160–180 are enriched in basic and acidic residues; the sequence is KENGKEKPAKAKAERKQREEQ. WD repeat units follow at residues 526–565, 567–607, 651–693, 696–734, 737–776, 780–819, and 835–865; these read GHTS…CIRT, PTGD…YMLV, THFR…SQVP, KSKG…MMKK, PGCK…KPYQ, IHNA…DLLQ, and VNDF…RLYT.

It belongs to the WD repeat BOP1/ERB1 family.

It localises to the nucleus. Its subcellular location is the nucleolus. It is found in the nucleoplasm. In terms of biological role, required for maturation of ribosomal RNAs and formation of the large ribosomal subunit. This Anopheles gambiae (African malaria mosquito) protein is Ribosome biogenesis protein BOP1 homolog.